The chain runs to 375 residues: Proclotting enzyme (375 aa).

An N-terminal signal peptide occupies residues 1 to 21; it reads MLVNNVFSLLCFPLLMSVVRC. A propeptide spanning residues 22–27 is cleaved from the precursor; that stretch reads STLSRQ. Gln-30 carries the pyrrolidone carboxylic acid modification. The 46-residue stretch at 39–84 folds into the Clip domain; sequence LCSNRFTEEGTCKNVLDCRILLQKNDYNLLKESICGFEGITPKVCC. Disulfide bonds link Cys-40/Cys-83, Cys-50/Cys-73, and Cys-56/Cys-84. A disordered region spans residues 90–113; that stretch reads VISSTQAPPETTTTERPPKQIPPN. 4 disulfides stabilise this stretch: Cys-118–Cys-248, Cys-157–Cys-173, Cys-295–Cys-311, and Cys-322–Cys-351. The N-linked (GlcNAc...) asparagine glycan is linked to Asn-122. A Peptidase S1 domain is found at 128 to 375; sequence IIGGREAPIG…FLDWIAEHMV (248 aa). Residue His-172 is the Charge relay system of the active site. Ca(2+)-binding residues include Glu-194, Asn-196, Ser-199, and Asp-202. The Charge relay system role is filled by Asp-228. N-linked (GlcNAc...) asparagine glycosylation is found at Asn-235 and Asn-304. Ser-326 (charge relay system) is an active-site residue.

This sequence belongs to the peptidase S1 family. CLIP subfamily. As to quaternary structure, in the active form, heterodimer of a light chain and a heavy chain; disulfide-linked. Forms a covalent heterodimer with intracellular coagulation inhibitor 2/LICI-2. In terms of processing, proteolytically cleaved into its mature active form by serine protease factor B. Cleavage produces a 25 kDa light chain containing the CLIP domain and a catalytic 31 kDa heavy chain which remain covalently associated through an interchain disulfide bond. Proteolytically cleaved by clotting factor G subunit beta. Contains six O-linked carbohydrate chains in the N-terminal light chain. Expressed in hemocytes (at protein level).

The protein resides in the cytoplasmic vesicle. It is found in the secretory vesicle. It localises to the secreted. It carries out the reaction Selective cleavage of 18-Arg-|- and 47-Arg-|- bonds in coagulogen to form coagulin and fragments.. Its activity is regulated as follows. Inhibited by intracellular coagulation inhibitor 2/LICI-2 and to a lesser extent by intracellular coagulation inhibitor 3/LICI-3. This enzyme is closely associated with an endotoxin-sensitive hemolymph coagulation system in limulus. Its active form catalyzes the conversion of coagulogen to insoluble coagulin gel. The polypeptide is Proclotting enzyme (Tachypleus tridentatus (Japanese horseshoe crab)).